The sequence spans 166 residues: Bacterial microcompartment shell protein EutK (166 aa).

In terms of domain architecture, BMC spans 4–88 (ALGLLEVDGM…PDDDTQWLVT (85 aa)). Residues 109–165 (ESADELLALLTSVRQGMTAGEVAAHFGWPLEKARNALEQLFSAGTLRKRSSRYRLKP) enclose the EutK-Ctail domain.

Belongs to the bacterial microcompartments protein family. In terms of assembly, monomeric in solution.

Its subcellular location is the bacterial microcompartment. Its pathway is amine and polyamine degradation; ethanolamine degradation. Probably a minor component of the bacterial microcompartment (BMC) shell dedicated to ethanolamine degradation. It might bind nucleic acids. The chain is Bacterial microcompartment shell protein EutK (eutK) from Escherichia coli (strain K12).